A 256-amino-acid chain; its full sequence is Phosphoribosylaminoimidazole-succinocarboxamide synthase (256 aa).

It belongs to the SAICAR synthetase family.

It catalyses the reaction 5-amino-1-(5-phospho-D-ribosyl)imidazole-4-carboxylate + L-aspartate + ATP = (2S)-2-[5-amino-1-(5-phospho-beta-D-ribosyl)imidazole-4-carboxamido]succinate + ADP + phosphate + 2 H(+). It functions in the pathway purine metabolism; IMP biosynthesis via de novo pathway; 5-amino-1-(5-phospho-D-ribosyl)imidazole-4-carboxamide from 5-amino-1-(5-phospho-D-ribosyl)imidazole-4-carboxylate: step 1/2. The sequence is that of Phosphoribosylaminoimidazole-succinocarboxamide synthase from Synechococcus sp. (strain JA-3-3Ab) (Cyanobacteria bacterium Yellowstone A-Prime).